The following is a 174-amino-acid chain: Nucleoside-triphosphatase THEP1 (174 aa).

ATP is bound by residues 7-14 (GRPGVGKT) and 94-101 (LIIIDEIG).

It belongs to the THEP1 NTPase family.

It catalyses the reaction a ribonucleoside 5'-triphosphate + H2O = a ribonucleoside 5'-diphosphate + phosphate + H(+). Its function is as follows. Has nucleotide phosphatase activity towards ATP, GTP, CTP, TTP and UTP. May hydrolyze nucleoside diphosphates with lower efficiency. This chain is Nucleoside-triphosphatase THEP1, found in Thermotoga sp. (strain RQ2).